A 196-amino-acid polypeptide reads, in one-letter code: Probable malonic semialdehyde reductase RutE (196 aa).

This sequence belongs to the nitroreductase family. HadB/RutE subfamily. Requires FMN as cofactor.

It carries out the reaction 3-hydroxypropanoate + NADP(+) = 3-oxopropanoate + NADPH + H(+). May reduce toxic product malonic semialdehyde to 3-hydroxypropionic acid, which is excreted. The protein is Probable malonic semialdehyde reductase RutE of Escherichia coli (strain K12 / MC4100 / BW2952).